A 337-amino-acid chain; its full sequence is MTSQATSQATSPALTTPVDAAPQISLATCVAPLVEALIRDADALRLKVSRGPRDALIVDAGITAAGGLEAGRRIAEICLGGLGRVALVPTGRFSPWDTLASVSTSGPVLACLGSQYAGWSLAAGDFFALGSGPGRAIAAVETLYGELGYRDRGEKVVLVLETAVVPPAEVVDEIAARCAVAPSDITLILTPTSSLAGTVQIVARVLEVALHKAHALHFPLEHIADGVGSAPICPPSPDFLTAMGRTNDAVLYGGDVHLFVHGPAEAAKDLATRLPSLASRDYGRPFGEIFAGYDCDFYKVDPLLFSPARVTVTAIDHGESFTAGGFDPILIARSFGG.

It belongs to the MCH family.

The protein localises to the cytoplasm. The catalysed reaction is 5,10-methenyl-5,6,7,8-tetrahydromethanopterin + H2O = N(5)-formyl-5,6,7,8-tetrahydromethanopterin + H(+). Its pathway is one-carbon metabolism; formaldehyde degradation; formate from formaldehyde (H(4)MPT route): step 3/5. Functionally, catalyzes the hydrolysis of methenyl-H(4)MPT(+) to 5-formyl-H(4)MPT. In Xanthobacter autotrophicus, this protein is Methenyltetrahydromethanopterin cyclohydrolase (mch).